The sequence spans 404 residues: Cysteine desulfurase IscS (404 aa).

Pyridoxal 5'-phosphate is bound by residues 75 to 76 (AT), N155, Q183, and 203 to 205 (SAH). K206 carries the post-translational modification N6-(pyridoxal phosphate)lysine. A pyridoxal 5'-phosphate-binding site is contributed by T243. The Cysteine persulfide intermediate role is filled by C328. C328 is a [2Fe-2S] cluster binding site.

This sequence belongs to the class-V pyridoxal-phosphate-dependent aminotransferase family. NifS/IscS subfamily. As to quaternary structure, homodimer. Forms a heterotetramer with IscU, interacts with other sulfur acceptors. It depends on pyridoxal 5'-phosphate as a cofactor.

The protein resides in the cytoplasm. The catalysed reaction is (sulfur carrier)-H + L-cysteine = (sulfur carrier)-SH + L-alanine. Its pathway is cofactor biosynthesis; iron-sulfur cluster biosynthesis. In terms of biological role, master enzyme that delivers sulfur to a number of partners involved in Fe-S cluster assembly, tRNA modification or cofactor biosynthesis. Catalyzes the removal of elemental sulfur atoms from cysteine to produce alanine. Functions as a sulfur delivery protein for Fe-S cluster synthesis onto IscU, an Fe-S scaffold assembly protein, as well as other S acceptor proteins. The protein is Cysteine desulfurase IscS of Vesicomyosocius okutanii subsp. Calyptogena okutanii (strain HA).